Consider the following 392-residue polypeptide: MQLRKLLLPGLLSVTLLSGCSLFNSEEDVVKMSPLPTVENQFTPTTAWSTSVGSGIGNFYSNLHPALADNVVYAADRAGLVKALNADDGKEIWSVSLAEKDGWFSKEPALLSGGVTVSGGHVYIGSEKAQVYALNTSDGTVAWQTKVAGEALSRPVVSDGLVLIHTSNGQLQALNEADGAVKWTVNLDMPSLSLRGESAPTTAFGAAVVGGDNGRVSAVLMEQGQMIWQQRISQATGSTEIDRLSDVDTTPVVVNGVVFALAYNGNLTALDLRSGQIMWKRELGSVNDFIVDGNRIYLVDQNDRVMALTIDGGVTLWTQSDLLHRLLTSPVLYNGNLVVGDSEGYLHWINVEDGRFVAQQKVDSSGFQTEPVAADGKLLIQAKDGTVYSITR.

An N-terminal signal peptide occupies residues 1–19; that stretch reads MQLRKLLLPGLLSVTLLSG. Cys-20 is lipidated: N-palmitoyl cysteine. A lipid anchor (S-diacylglycerol cysteine) is attached at Cys-20.

It belongs to the BamB family. As to quaternary structure, part of the Bam complex, which is composed of the outer membrane protein BamA, and four lipoproteins BamB, BamC, BamD and BamE. Monomer. Interacts directly with BamA. The Bam complex has the shape of a hat, with the BamA beta-barrel crown in the outer membrane and the periplasmic brim formed by the BamA POTRA domains and the 4 lipoproteins.

It is found in the cell outer membrane. Its function is as follows. Part of the outer membrane protein assembly complex (Bam), which is involved in assembly and insertion of beta-barrel proteins into the outer membrane. Nonessential member of the complex, which may orient the flexible periplasmic domain of BamA for interaction with other Bam components, chaperones and nascent outer membrane proteins. Efficient substrate folding and insertion into the outer membrane requires all 5 subunits. A lateral gate may open between the first and last strands of the BamA beta-barrel that allows substrate to insert into the outer membrane; comparison of the structures of complete and nearly complete Bam complexes show there is considerable movement of all 5 proteins. The protein is Outer membrane protein assembly factor BamB of Escherichia coli (strain K12).